We begin with the raw amino-acid sequence, 909 residues long: MVEEEFMNEFLKKTGYQVYKCKKCGERFWSLVPRDTCPDRPCSKYDFLYNEYKGVPPLTFDEARRKFIEFFTSHGHGYVDPYPVLARWRNDLYLTIASIIVFQPAVTEGIVDPPYNPLVIVQPSVRLEDIDNVGLTFGRHLTSFEMGGHHAFNKKDQYVYWVNETLQYAFDFFTKIIGIEPENIVFKESWWEGGGNAGPAYEVLVDGLELATLVFMKYKIVNGKKVRNPVLVVDTGYGIERIAWFTQRTPTAFHTIFSSLLETYKNILGIDEPPYDVLKKIVYLLSDKEIEDVYMLNKYLEEIDYSEYYKSLVDTINLYTALDHVKTLSLMLSDGIVSSNTGEGYLARLVIRRLLRTLIRLGIKVSTLEDIVLELIDKQAKYWKGRYVYDKFHRRLDYILDVMSYETRKYIDIVTRGIREVDRFIKKKKKITFDDLIQIYDSKGIPPEIVVERAKHYGQEIRVPSNFYSLIAARHGGSQALIKEKEHELPDEIVEWASKHDPTKKLFHENPYLRRASAKVLDSLNEYVIFDQTIFYPRAGGQDHDKGYVILGNEHIPVKHVYKVGEVIVHQLATKRRLVPGTQVELVIDWYNRYRLMRHHTATHIVLGAARKVLGEHVWQAGAEKTVEKARLDITHYKSLSDEEIRKIEELANKVIDERIDLKFYFLPKFEAEKRFGLRIYQGGAVYSPILRIVEIPGWDAEACFGTHVYNTSEIGGIKIIKAEKIQDGVIRLEYIASTRLPEYISDLQKEVDKALKFLGAKGLPISIVAKKVSEELDKYKTLLIQYRRLFKEILLKHLLEEALEICGLKTVVIEKQLEDEQLYKSIIEDLSLKKRVLTIYVSDKFVEIAIHPDEANNRKLDLRKLVEILQNMGGRGGGKPDHIYIKIKEPKQIVKLIVEAITNLLCKA.

Zn(2+) is bound by residues histidine 600, histidine 604, cysteine 704, and histidine 708.

Belongs to the class-II aminoacyl-tRNA synthetase family. Zn(2+) is required as a cofactor.

The protein resides in the cytoplasm. It carries out the reaction tRNA(Ala) + L-alanine + ATP = L-alanyl-tRNA(Ala) + AMP + diphosphate. In terms of biological role, catalyzes the attachment of alanine to tRNA(Ala) in a two-step reaction: alanine is first activated by ATP to form Ala-AMP and then transferred to the acceptor end of tRNA(Ala). Also edits incorrectly charged Ser-tRNA(Ala) and Gly-tRNA(Ala) via its editing domain. The sequence is that of Alanine--tRNA ligase from Staphylothermus marinus (strain ATCC 43588 / DSM 3639 / JCM 9404 / F1).